The chain runs to 139 residues: Large ribosomal subunit protein bL17 (139 aa).

This sequence belongs to the bacterial ribosomal protein bL17 family. Part of the 50S ribosomal subunit. Contacts protein L32.

The polypeptide is Large ribosomal subunit protein bL17 (Myxococcus xanthus (strain DK1622)).